A 396-amino-acid polypeptide reads, in one-letter code: MTFRTLDTADLAGKRALVRVDFNVPVDGGKVADDTRLKAALPTIRFLADKGAKVVLLAHFDRPKGKVVPEMSLAFVAEPLAALLGAPVAFVGDCVGPAAAEVVNGLADGGVALLENVRFHAGEEKNDAEFAKALAANGDVYVNDAFSAAHRAHASTEGLAKLLPAYPGVSMQRELEALDAALGNPKKPVIGIVGGSKVSTKLDLLNNLVAKLDRLAIGGGMANTFLFAQGHDVGGSLCEKDLADTAREIMEKAKAAGCELLLPVDVVVAKKVAPGVETAVRSLSEVQADDLILDAGPESAKRLLAAMDQSLTLIWNGPLGVFEVPPFDEATVSAAKHAASLAKSGKIVAVAGGGDTVAALNHAGVSADFTFVSTAGGAFLEWMEGKTLPGVAALES.

Substrate contacts are provided by residues 21-23, R36, 59-62, R118, and R151; these read DFN and HFDR. ATP-binding positions include K201, E323, and 353–356; that span reads GGDT.

It belongs to the phosphoglycerate kinase family. In terms of assembly, monomer.

The protein resides in the cytoplasm. It catalyses the reaction (2R)-3-phosphoglycerate + ATP = (2R)-3-phospho-glyceroyl phosphate + ADP. It participates in carbohydrate degradation; glycolysis; pyruvate from D-glyceraldehyde 3-phosphate: step 2/5. The protein is Phosphoglycerate kinase of Caulobacter vibrioides (strain ATCC 19089 / CIP 103742 / CB 15) (Caulobacter crescentus).